The primary structure comprises 156 residues: H/ACA ribonucleoprotein complex subunit 2-like protein (156 aa).

Belongs to the eukaryotic ribosomal protein eL8 family. Component of the small nucleolar ribonucleoprotein particle containing H/ACA-type snoRNAs (H/ACA snoRNPs).

The protein localises to the nucleus. It is found in the nucleolus. Required for ribosome biogenesis. Part of a complex which catalyzes pseudouridylation of rRNA. This involves the isomerization of uridine such that the ribose is subsequently attached to C5, instead of the normal N1. Pseudouridine ('psi') residues may serve to stabilize the conformation of rRNAs. This is H/ACA ribonucleoprotein complex subunit 2-like protein from Arabidopsis thaliana (Mouse-ear cress).